A 147-amino-acid chain; its full sequence is Large ribosomal subunit protein bL9 (147 aa).

The protein belongs to the bacterial ribosomal protein bL9 family.

Its function is as follows. Binds to the 23S rRNA. This Geotalea uraniireducens (strain Rf4) (Geobacter uraniireducens) protein is Large ribosomal subunit protein bL9.